Reading from the N-terminus, the 726-residue chain is Methyltransferase FGSG_00040 (726 aa).

TPR repeat units follow at residues 187 to 220 (SSDI…GQNV), 224 to 257 (QLAF…AMPS), and 258 to 291 (EKSL…YPEN). Residues 336–531 (APVEIRESPG…AKTEIFFCYR (196 aa)) form the SET domain. Y530 provides a ligand contact to S-adenosyl-L-methionine.

Belongs to the class V-like SAM-binding methyltransferase superfamily.

It participates in mycotoxin biosynthesis. Its function is as follows. Methyltransferase; part of the gene cluster that mediates the biosynthesis of gramillins A and B, bicyclic lipopeptides that induce cell death in maize leaves but not in wheat leaves. The nonribosomal peptide synthetase GRA1 incorporates respectively a glutamic adic (Glu), a leucine (Leu), a serine (Ser), a hydroxyglutamine (HOGln), a 2-amino decanoic acid, and 2 cysteins (CysB and CysA). The biosynthesis of 2-amino decanoic acid incorporated in gramillins could be initiated by a fatty acid synthase composed of the alpha and beta subunits FGSG_00036 and FGSG_11656. The cytochrome P450 monooxygenase FGSG_15680 could hydroxylate the fatty acid chain. Subsequent oxidation to the ketone by the oxidoreductase FGSG_00048 and transamination by aminotransferase FGSG_00049 could form 2-amino-decanoic acid. On the other hand, FGSG_15680 could also be responsible for the HO-modified glutamine at the gamma-position. Whether hydroxylation occurs on the fully assembled product or on the Gln residue prior to assembly into the gramillins requires further proof. The thioredoxin FGSG_00043 could also be required for the disulfide-bond formation between CysA and CysB. The specific involvement of the remaining proteins from the cluster is more difficult to discern, but could have broader regulatory (FGSG_00040 and FGSG_11657) or enzymatic functions (FGSG_00044 and FGSG_00045). The final C-domain of GRA1 does not possess the expected sequence of a termination CT domain, often implicated in macrocyclization and release of a cyclopeptidein fungal NRPs; and the thioesterase FGSG_00047 may act in concert with the terminal C-domain of GRA1 to catalyze the formation of the macrocyclic anhydride and release of the products. In Gibberella zeae (strain ATCC MYA-4620 / CBS 123657 / FGSC 9075 / NRRL 31084 / PH-1) (Wheat head blight fungus), this protein is Methyltransferase FGSG_00040.